The sequence spans 331 residues: MKQTVYTASPESQQIHVWSLNHEGTLTLVQVVDVPGQVQPMVVSPDKRYLYVGVRPEFRVLAYRIAPDDGALTFAAESALPGSPTHISTDHHGRFVFVGSYNAGNVSVTRLQDGLPVELVDVVEGLDGCHSANITPDNRTLWVPALKQERICLFTLSDDGHLVAQEPAEVNTVEGAGPRHMVFHPNRQYAYCVNELNSSVDVWQLKNPHGEIECVQTLDMMPADFSDTRWAADIHITPDGRHLYACDRTASLITVFSVSEDGSVLSVEGFQPTEAQPRGFNIDNSGKYLIAAGQKSHHIAVYEITGTQGLLTEKGRYAVGQGPMWVVVNAY.

Belongs to the cycloisomerase 2 family.

It catalyses the reaction 6-phospho-D-glucono-1,5-lactone + H2O = 6-phospho-D-gluconate + H(+). The protein operates within carbohydrate degradation; pentose phosphate pathway; D-ribulose 5-phosphate from D-glucose 6-phosphate (oxidative stage): step 2/3. Catalyzes the hydrolysis of 6-phosphogluconolactone to 6-phosphogluconate. The sequence is that of 6-phosphogluconolactonase from Salmonella paratyphi A (strain ATCC 9150 / SARB42).